The following is a 262-amino-acid chain: Phosphonates import ATP-binding protein PhnC (262 aa).

Positions 5 to 253 (IRVEKLAKTF…RFDHLYRSIN (249 aa)) constitute an ABC transporter domain. 37–44 (GPSGSGKS) contacts ATP.

It belongs to the ABC transporter superfamily. Phosphonates importer (TC 3.A.1.9.1) family. The complex is composed of two ATP-binding proteins (PhnC), two transmembrane proteins (PhnE) and a solute-binding protein (PhnD).

The protein resides in the cell inner membrane. It carries out the reaction phosphonate(out) + ATP + H2O = phosphonate(in) + ADP + phosphate + H(+). Part of the ABC transporter complex PhnCDE involved in phosphonates import. Responsible for energy coupling to the transport system. The polypeptide is Phosphonates import ATP-binding protein PhnC (Shigella flexneri serotype 5b (strain 8401)).